The sequence spans 337 residues: Outer membrane protein assembly factor BamC (337 aa).

The first 16 residues, 1-16, serve as a signal peptide directing secretion; the sequence is MKKWLFPFAFVATLAG. Cysteine 17 carries the N-palmitoyl cysteine lipid modification. Cysteine 17 is lipidated: S-diacylglycerol cysteine.

Belongs to the BamC family. As to quaternary structure, part of the Bam complex.

It localises to the cell outer membrane. Functionally, part of the outer membrane protein assembly complex, which is involved in assembly and insertion of beta-barrel proteins into the outer membrane. This Pasteurella multocida (strain Pm70) protein is Outer membrane protein assembly factor BamC.